Consider the following 208-residue polypeptide: Proheparin-binding EGF-like growth factor (208 aa).

The N-terminal stretch at 1–23 (MKLLPSVMLKLFLAAVLSALVTG) is a signal peptide. Residues 24–62 (ESLERLRRGLAAATSNPDPPTGSTNQLLPTGGDRAQGVQ) constitute a propeptide that is removed on maturation. Over 24 to 160 (ESLERLRRGL…ENPLYTYDHT (137 aa)) the chain is Extracellular. Disordered stretches follow at residues 35 to 57 (AATS…GGDR) and 80 to 104 (PQGL…LGKK). The segment covering 36 to 51 (ATSNPDPPTGSTNQLL) has biased composition (polar residues). The O-linked (GalNAc...) threonine glycan is linked to Thr85. Over residues 91–102 (NGKKKKKGKGLG) the composition is skewed to basic residues. The EGF-like domain occupies 104-144 (KRDPCLRKYKDYCIHGECRYLQEFRTPSCKCLPGYHGHRCH). 3 disulfides stabilise this stretch: Cys108–Cys121, Cys116–Cys132, and Cys134–Cys143. The propeptide at 149-208 (PVENPLYTYDHTTVLAVVAVVLSSVCLLVIVGLLMFRYHRRGGYDLESEEKVKLGVASSH) is C-terminal. Residues 161-184 (TVLAVVAVVLSSVCLLVIVGLLMF) traverse the membrane as a helical segment. The Cytoplasmic segment spans residues 185 to 208 (RYHRRGGYDLESEEKVKLGVASSH).

As to quaternary structure, interacts with FBLN1. Interacts with EGFR and ERBB4. Post-translationally, O-glycosylated. As to expression, most abundant in kidney, skeletal muscle, lung, spleen, brain and heart.

It is found in the secreted. Its subcellular location is the extracellular space. The protein localises to the cell membrane. Functionally, growth factor that mediates its effects via EGFR, ERBB2 and ERBB4. Required for normal cardiac valve formation and normal heart function. Promotes smooth muscle cell proliferation. May be involved in macrophage-mediated cellular proliferation. It is mitogenic for fibroblasts, but not endothelial cells. It is able to bind EGF receptor/EGFR with higher affinity than EGF itself and is a far more potent mitogen for smooth muscle cells than EGF. Also acts as a diphtheria toxin receptor. This is Proheparin-binding EGF-like growth factor (Hbegf) from Mus musculus (Mouse).